The primary structure comprises 138 residues: Acidic phospholipase A2 Cvv-E6b (138 aa).

Positions 1–16 are cleaved as a signal peptide; it reads MRTLWILAVLLLGVEG. Disulfide bonds link cysteine 42-cysteine 131, cysteine 44-cysteine 60, cysteine 59-cysteine 111, cysteine 65-cysteine 138, cysteine 66-cysteine 104, cysteine 73-cysteine 97, and cysteine 91-cysteine 102. 3 residues coordinate Ca(2+): tyrosine 43, glycine 45, and glycine 47. The active site involves histidine 63. Residue aspartate 64 participates in Ca(2+) binding. Residue aspartate 105 is part of the active site.

The cofactor is Ca(2+). Expressed by the venom gland.

The protein resides in the secreted. It catalyses the reaction a 1,2-diacyl-sn-glycero-3-phosphocholine + H2O = a 1-acyl-sn-glycero-3-phosphocholine + a fatty acid + H(+). Snake venom phospholipase A2 (PLA2) that shows very low inhibition of ADP-induced platelet aggregation in platelet-rich plasma of human, rabbit and guinea pig. PLA2 catalyzes the calcium-dependent hydrolysis of the 2-acyl groups in 3-sn-phosphoglycerides. The chain is Acidic phospholipase A2 Cvv-E6b from Crotalus viridis viridis (Prairie rattlesnake).